The primary structure comprises 278 residues: Urease accessory protein UreD (278 aa).

Belongs to the UreD family. As to quaternary structure, ureD, UreF and UreG form a complex that acts as a GTP-hydrolysis-dependent molecular chaperone, activating the urease apoprotein by helping to assemble the nickel containing metallocenter of UreC. The UreE protein probably delivers the nickel.

The protein resides in the cytoplasm. Required for maturation of urease via the functional incorporation of the urease nickel metallocenter. This Pseudomonas putida (strain ATCC 700007 / DSM 6899 / JCM 31910 / BCRC 17059 / LMG 24140 / F1) protein is Urease accessory protein UreD.